The sequence spans 247 residues: Virulence plasmid protein pGP6-D (247 aa).

It belongs to the UPF0137 (pGP6-D) family.

This chain is Virulence plasmid protein pGP6-D, found in Chlamydia trachomatis.